We begin with the raw amino-acid sequence, 102 residues long: Small ribosomal subunit protein uS10 (102 aa).

This sequence belongs to the universal ribosomal protein uS10 family. In terms of assembly, part of the 30S ribosomal subunit.

In terms of biological role, involved in the binding of tRNA to the ribosomes. This chain is Small ribosomal subunit protein uS10, found in Caulobacter sp. (strain K31).